Reading from the N-terminus, the 122-residue chain is UPF0231 protein VIBHAR_03438 (122 aa).

The protein belongs to the UPF0231 family.

This Vibrio campbellii (strain ATCC BAA-1116) protein is UPF0231 protein VIBHAR_03438.